A 331-amino-acid chain; its full sequence is MSTKEKLISHVMKEEPVGSRNKVTVVGVGMVGMASAISILLKDLCDELAMVDVMEDKLKGEVMDLQHGSLFLKTKIVGDKDYSVTANSKVVVVTAGARQQEGESRLNLVQRNVNIFKFIIPNIVKYSPNCILMVVSNPVDILTYVAWKLSGFPRNRVIGSGTNLDSARFRHLIGEKLHLHPSSCHAWIVGEHGDSSVPVWSGVNVAGVSLQGLNPQMGTEGDGENWKAIHKEVVDGAYEVIKLKGYTSWAIGMSVADLVESIIKNMHKVHPVSTLVQGMHGVKDEVFLSVPSVLGNSGLTDVIHMTLKAEEEKQLQKSAETLWGVQKELVL.

Residues 29–57 (GMVGMASAISILLKDLCDELAMVDVMEDK) and Arg98 contribute to the NAD(+) site. Arg105, Asn137, and Arg168 together coordinate substrate. An NAD(+)-binding site is contributed by Asn137. His192 functions as the Proton acceptor in the catalytic mechanism. Thr247 contributes to the substrate binding site.

This sequence belongs to the LDH/MDH superfamily. LDH family. Homotetramer.

Its subcellular location is the cytoplasm. The enzyme catalyses (S)-lactate + NAD(+) = pyruvate + NADH + H(+). It participates in fermentation; pyruvate fermentation to lactate; (S)-lactate from pyruvate: step 1/1. Functionally, interconverts simultaneously and stereospecifically pyruvate and lactate with concomitant interconversion of NADH and NAD(+). In Dissostichus mawsoni (Antarctic cod), this protein is L-lactate dehydrogenase A chain (ldha).